Reading from the N-terminus, the 275-residue chain is Undecaprenyl-diphosphatase 2 (275 aa).

Transmembrane regions (helical) follow at residues 48-68 (NAYVFKIVIQLGSILAVALLF), 90-110 (GLTLGKVAVGLLPAAVLGLLF), 117-137 (IFHVRTVAFALIAGAFLMIAA), 154-174 (ISYKQALAIGLFQCLALWPGF), 195-215 (ANFTFIMAIPIMVGASALSLI), 223-243 (ISLLPFYATGFISAFLVSLVV), and 254-274 (IKLVPFALYRIALGLLLLFLF).

The protein belongs to the UppP family.

It localises to the cell membrane. It carries out the reaction di-trans,octa-cis-undecaprenyl diphosphate + H2O = di-trans,octa-cis-undecaprenyl phosphate + phosphate + H(+). Catalyzes the dephosphorylation of undecaprenyl diphosphate (UPP). Confers resistance to bacitracin. In Shouchella clausii (strain KSM-K16) (Alkalihalobacillus clausii), this protein is Undecaprenyl-diphosphatase 2.